A 95-amino-acid polypeptide reads, in one-letter code: GIPCGESCVFIPCITGAIGCSCKSKVCYRNHVIAAEAKTMDDHHLLCQSHEDCITKGTGNFCAPFPDQDIKYGWCFRAESEGFMLKDHLKMSITN.

The segment at residues 1–30 (GIPCGESCVFIPCITGAIGCSCKSKVCYRN) is a cross-link (cyclopeptide (Gly-Asn)). 3 cysteine pairs are disulfide-bonded: Cys4-Cys20, Cys8-Cys22, and Cys13-Cys27. Positions 31-95 (HVIAAEAKTM…KDHLKMSITN (65 aa)) are cleaved as a propeptide — removed in mature form.

Contains 3 disulfide bonds. In terms of processing, this is a cyclic peptide. As to expression, expressed in flower, stem, shoot, root, leaf, seed, pod and nodule (at protein level).

Probably participates in a plant defense mechanism. Active against Gram-negative bacteria E.coli ATCC 700926 (MIC=1.1 uM), K.pneumoniae ATTC 13883 (MIC=2.7 uM) and P.aeruginosa ATCC 39018 (MIC=4.7 uM). Has hemolytic and cytotoxic activity. The chain is Cliotide T1 from Clitoria ternatea (Butterfly pea).